A 171-amino-acid polypeptide reads, in one-letter code: ATP synthase subunit b (171 aa).

Residues 14-34 (LGDMLFIGISFIVLMALISVV) form a helical membrane-spanning segment. Residues 56–97 (SAQKSRQEASDLADQRRDALSHSRAEASEIVADAKKSGEKQR) are compositionally biased toward basic and acidic residues. The disordered stretch occupies residues 56–104 (SAQKSRQEASDLADQRRDALSHSRAEASEIVADAKKSGEKQRSSIVADA).

The protein belongs to the ATPase B chain family. F-type ATPases have 2 components, F(1) - the catalytic core - and F(0) - the membrane proton channel. F(1) has five subunits: alpha(3), beta(3), gamma(1), delta(1), epsilon(1). F(0) has three main subunits: a(1), b(2) and c(10-14). The alpha and beta chains form an alternating ring which encloses part of the gamma chain. F(1) is attached to F(0) by a central stalk formed by the gamma and epsilon chains, while a peripheral stalk is formed by the delta and b chains.

The protein resides in the cell membrane. In terms of biological role, f(1)F(0) ATP synthase produces ATP from ADP in the presence of a proton or sodium gradient. F-type ATPases consist of two structural domains, F(1) containing the extramembraneous catalytic core and F(0) containing the membrane proton channel, linked together by a central stalk and a peripheral stalk. During catalysis, ATP synthesis in the catalytic domain of F(1) is coupled via a rotary mechanism of the central stalk subunits to proton translocation. Component of the F(0) channel, it forms part of the peripheral stalk, linking F(1) to F(0). The polypeptide is ATP synthase subunit b (Lactiplantibacillus plantarum (strain ATCC BAA-793 / NCIMB 8826 / WCFS1) (Lactobacillus plantarum)).